The primary structure comprises 1006 residues: Transcription factor tau subunit sfc4 (1006 aa).

The interval G64–D91 is disordered. A compositionally biased stretch (acidic residues) spans W66–S80. 6 TPR repeats span residues Q133–V166, H205–N238, A277–Y310, H396–Y429, W431–Q464, and I466–N499. Positions L506–L554 form a coiled coil. TPR repeat units lie at residues P841–C874 and Q924–S957.

Component of the TFIIIC complex including sfc1, sfc3, sfc4, sfc6 and sfc7. The subunits are organized in two globular domains, tauA and tauB, connected by a proteolysis-sensitive and flexible linker. Interacts with sfc1, sfc3 and sfc6. Post-translationally, phosphorylated.

It is found in the nucleus. TFIIIC mediates tRNA and 5S RNA gene activation by binding to intragenic promoter elements. Upstream of the transcription start site, TFIIIC assembles the initiation complex TFIIIB-TFIIIC-tDNA, which is sufficient for RNA polymerase III recruitment and function. Part of the tauA domain of TFIIIC that binds boxA DNA promoter sites of tRNA and similar genes. Sfc4 is the TFIIIB assembling subunit of TFIIIC. In Schizosaccharomyces pombe (strain 972 / ATCC 24843) (Fission yeast), this protein is Transcription factor tau subunit sfc4.